The primary structure comprises 74 residues: Protein SMIM7 homolog (74 aa).

A helical membrane pass occupies residues phenylalanine 53 to glycine 73.

It belongs to the SMIM7 family.

Its subcellular location is the membrane. The polypeptide is Protein SMIM7 homolog (Ixodes scapularis (Black-legged tick)).